The primary structure comprises 318 residues: sn-1 stearoyl-lipid 9-desaturase (318 aa).

2 consecutive transmembrane segments (helical) span residues 56–76 (VIFF…PQFF) and 80–100 (AVGM…TLGF). Residues 101 to 106 (HRCISH) carry the Histidine box-1 motif. Residues 117 to 137 (YIFVICGTLACQGGVFEWVGL) traverse the membrane as a helical segment. Positions 138–142 (HRMHH) match the Histidine box-2 motif. Residues 201-221 (VALGLILFALGGWPFVIWGIF) form a helical membrane-spanning segment. Residues 271–275 (HHAYQ) carry the Histidine box-3 motif.

Belongs to the fatty acid desaturase type 2 family. Fe(2+) serves as cofactor.

The protein localises to the cellular thylakoid membrane. The catalysed reaction is a 1-octadecanoyl 2-acyl-glycerolipid + 2 reduced [2Fe-2S]-[ferredoxin] + O2 + 2 H(+) = a 1-[(9Z)-octadecenoyl]-2-acyl-glycerolipid + 2 oxidized [2Fe-2S]-[ferredoxin] + 2 H2O. It functions in the pathway lipid metabolism; polyunsaturated fatty acid biosynthesis. In terms of biological role, desaturase involved in fatty acid biosynthesis. Introduces a double bond at carbon 9 of stearoyl groups (18:0) attached to the sn-1 position of the glycerol moiety of membrane glycerolipids. Does not desaturate palmitic acid (16:0), palmitoleic acid (16:1) and cis-vaccenic acid (18:1). The polypeptide is sn-1 stearoyl-lipid 9-desaturase (Synechocystis sp. (strain ATCC 27184 / PCC 6803 / Kazusa)).